A 107-amino-acid chain; its full sequence is Large ribosomal subunit protein uL24 (107 aa).

The protein belongs to the universal ribosomal protein uL24 family. As to quaternary structure, part of the 50S ribosomal subunit.

Its function is as follows. One of two assembly initiator proteins, it binds directly to the 5'-end of the 23S rRNA, where it nucleates assembly of the 50S subunit. In terms of biological role, one of the proteins that surrounds the polypeptide exit tunnel on the outside of the subunit. The protein is Large ribosomal subunit protein uL24 of Thermotoga neapolitana (strain ATCC 49049 / DSM 4359 / NBRC 107923 / NS-E).